The following is an 818-amino-acid chain: H(+)/Cl(-) exchange transporter 3 (818 aa).

The Cytoplasmic segment spans residues 1–125 (MESEQLFHRG…WEMTKSLYDA (125 aa)). Positions 13–17 (RNSYN) match the Di-leucine internalization motif; mediates targeting to late endosome and lysosome membranes motif. The IP motif; mediates targeting to recycling endosomes signature appears at 18–19 (SI). 3 consecutive short sequence motifs (di-leucine internalization motif; mediates targeting to late endosome and lysosome membranes) follow at residues 28–29 (LL), 46–47 (LL), and 71–75 (LLDLL). A helical membrane pass occupies residues 126-163 (WSGWLVVTLTGLASGALAGLIDIAADWMTDLKEGICLS). An N-linked (GlcNAc...) asparagine glycan is attached at Asn177. Residues 209–232 (MNYIMYIFWALSFAFLAVSLVKVF) form a helical membrane-spanning segment. The Selectivity filter part_1 motif lies at 238–242 (GSGIP). Chloride is bound at residue Ser239. The helical intramembrane region spans 241-248 (IPEIKTIL). 2 helical membrane passes run 258–276 (GKWT…VASG) and 282–301 (EGPL…YLFP). Residues 280 to 284 (GKEGP) carry the Selectivity filter part_2 motif. 2 intramembrane regions (helical) span residues 313–325 (VLSA…VSVA) and 329–337 (PIGGVLFSL). Transmembrane regions (helical) follow at residues 349–367 (LWRS…RSIN), 391–416 (FPFI…AWCR), and 423–443 (FGKY…VIAF). N-linked (GlcNAc...) asparagine glycosylation is found at Asn451 and Asn479. 2 consecutive transmembrane segments (helical) span residues 500 to 520 (IWQL…TFGI) and 525 to 544 (GLFI…VGIA). The short motif at 525–529 (GLFIP) is the Selectivity filter part_3 element. Position 527 (Phe527) interacts with chloride. 2 consecutive intramembrane regions (helical) follow at residues 572-586 (GLYA…LGGV) and 590-601 (TVSLVVIVFELT). Positions 602-605 (GGLE) form an intramembrane region, note=Loop between two helices. A helical transmembrane segment spans residues 606–624 (YIVPLMAAVMTSKWVGDAF). The Cytoplasmic segment spans residues 625–818 (GREGIYEAHI…NQDPASIMFN (194 aa)). Position 630 (Tyr630) interacts with chloride. 2 CBS domains span residues 658–722 (MRPR…ARKK) and 755–812 (LDMS…NQDP). Residues 689–691 (YNG) and 796–799 (TKKD) contribute to the ATP site.

This sequence belongs to the chloride channel (TC 2.A.49) family. ClC-3/CLCN3 subfamily. As to quaternary structure, monomer and homodimer. Forms heterodimers with CLCN4. N-glycosylated. Detected in kidney, in the apical part of proximal tubule cells (at protein level). Expressed at high levels in the kidney while a low level expression is seen in the brain. Within the brain, it is prominent in the hippocampus, cerebral cortex and olfactory bulb. As to expression, brain, pancreas, kidney, liver, lung, retina, olfactory bulb, and spinal cord. In terms of tissue distribution, pancreas, kidney, liver, lung and retina. Brain, heart, pancreas, kidney, liver, lung, retina, olfactory bulb, and spinal cord. As to expression, expressed at high levels in the liver and at low levels in the brain.

Its subcellular location is the cytoplasmic vesicle. The protein localises to the secretory vesicle membrane. The protein resides in the lysosome membrane. It is found in the late endosome membrane. It localises to the cell membrane. Its subcellular location is the early endosome membrane. The protein localises to the recycling endosome membrane. With respect to regulation, inhibited by Cd(2+). May influence large dense-core vesicle exocytosis in adrenal chromaffin cells. Functionally, strongly outwardly rectifying, electrogenic H(+)/Cl(-)exchanger which mediates the exchange of chloride ions against protons. The CLC channel family contains both chloride channels and proton-coupled anion transporters that exchange chloride or another anion for protons. The presence of conserved gating glutamate residues is typical for family members that function as antiporters. In terms of biological role, strongly outwardly rectifying, electrogenic H(+)/Cl(-)exchanger which mediates the exchange of chloride ions against protons. Facilitates endosomal acidification and chloride accumulation in hepatocytes. Its function is as follows. Strongly outwardly rectifying, electrogenic H(+)/Cl(-)exchanger which mediates the exchange of chloride ions against protons. The sequence is that of H(+)/Cl(-) exchange transporter 3 (Clcn3) from Mus musculus (Mouse).